The following is a 524-amino-acid chain: Apoptosis inhibitor 5-A (524 aa).

The interval 1–360 (MATVEELYRS…HQLGRKLPDF (360 aa)) is ARM-like and Heat-like helical repeats. A disordered region spans residues 440–524 (TLSWKPVQRT…RGNRSRGRIY (85 aa)). The Nuclear localization signal signature appears at 455 to 476 (KRTSDETSSTSPPKKPIVGPKR). A compositionally biased stretch (gly residues) spans 503–516 (GFQGGRGRGWGGRG).

It belongs to the API5 family. Monomer.

The protein resides in the nucleus. Its function is as follows. May be an antiapoptotic factor. This is Apoptosis inhibitor 5-A (api5-a) from Xenopus laevis (African clawed frog).